The sequence spans 194 residues: Cathelicidin-related peptide isoform 3 (194 aa).

The first 22 residues, 1 to 22 (MQGFFWKTWLVLAVCGTPASLA), serve as a signal peptide directing secretion. A propeptide spanning residues 23-164 (HRPLSYGEAL…DQPKRVKRFK (142 aa)) is cleaved from the precursor. Intrachain disulfides connect Cys79–Cys90 and Cys101–Cys118. Residues 125-145 (EEEEEEEEEEQKAEAENDEEV) show a composition bias toward acidic residues. The tract at residues 125 to 156 (EEEEEEEEEEQKAEAENDEEVEKEKGDEEKDQ) is disordered. The segment covering 146–156 (EKEKGDEEKDQ) has biased composition (basic and acidic residues).

Belongs to the cathelicidin family. As to expression, expressed by the venom gland.

It is found in the secreted. The protein resides in the target cell membrane. In terms of biological role, potent antimicrobial peptide against Gram-negative and Gram-positive bacteria. Adopts an amphipathic alpha helical conformation, that may allow to partition into the target membrane. Low hemolytic activities have been observed on mammalian cells. The sequence is that of Cathelicidin-related peptide isoform 3 from Crotalus durissus cascavella (Northeastern Brazilian rattlesnake).